The chain runs to 149 residues: Calmodulin-like protein 3 (149 aa).

4 EF-hand domains span residues 8–43 (EQIA…LGQN), 44–79 (PTEA…KMKD), 81–116 (DSEE…LGEK), and 117–149 (LSDE…LVSK). Residues Asp21, Asp23, Asp25, Cys27, Glu32, Asp57, Asp59, Asn61, Thr63, Glu68, Asp94, Asp96, Asn98, Glu105, Asp130, Asp132, Asp134, Gln136, and Glu141 each contribute to the Ca(2+) site.

This sequence belongs to the calmodulin family. Interacts with MYO10, the interaction is calcium-dependent and essential for MYO10 function in filopodial extension.

Its function is as follows. May function as a specific light chain of unconventional myosin-10 (MYO10), also enhances MYO10 translation, possibly by acting as a chaperone for the emerging MYO10 heavy chain protein. May compete with calmodulin by binding, with different affinities, to cellular substrates. The polypeptide is Calmodulin-like protein 3 (Calml3) (Rattus norvegicus (Rat)).